The chain runs to 882 residues: Isoamylase 2, chloroplastic (882 aa).

The N-terminal 70 residues, 1–70 (MAAWSPSVGI…LQSYQFSKIC (70 aa)), are a transit peptide targeting the chloroplast.

This sequence belongs to the glycosyl hydrolase 13 family. As to quaternary structure, associates with ISA1 to form the heteromultimeric complex Iso1 required for amylopectin synthesis.

The protein localises to the plastid. It localises to the chloroplast. It functions in the pathway glycan biosynthesis; starch biosynthesis. Involved in the trimming of pre-amylopectin chains. Accelerates the crystallization of nascent amylopectin molecules during starch synthesis. ISA1 and ISA2 work exclusively together as a multimeric holoenzyme. ISA1-ISA2 removes preferentially branches that are very close to other branches. The sequence is that of Isoamylase 2, chloroplastic (ISA2) from Arabidopsis thaliana (Mouse-ear cress).